The primary structure comprises 84 residues: NAD(P)H-quinone oxidoreductase subunit O (84 aa).

The protein belongs to the complex I NdhO subunit family. In terms of assembly, NDH-1 can be composed of about 15 different subunits; different subcomplexes with different compositions have been identified which probably have different functions.

The protein resides in the cellular thylakoid membrane. It carries out the reaction a plastoquinone + NADH + (n+1) H(+)(in) = a plastoquinol + NAD(+) + n H(+)(out). The enzyme catalyses a plastoquinone + NADPH + (n+1) H(+)(in) = a plastoquinol + NADP(+) + n H(+)(out). In terms of biological role, NDH-1 shuttles electrons from an unknown electron donor, via FMN and iron-sulfur (Fe-S) centers, to quinones in the respiratory and/or the photosynthetic chain. The immediate electron acceptor for the enzyme in this species is believed to be plastoquinone. Couples the redox reaction to proton translocation, and thus conserves the redox energy in a proton gradient. Cyanobacterial NDH-1 also plays a role in inorganic carbon-concentration. The chain is NAD(P)H-quinone oxidoreductase subunit O from Synechococcus sp. (strain CC9605).